We begin with the raw amino-acid sequence, 258 residues long: UDP-N-acetylenolpyruvoylglucosamine reductase (258 aa).

Arg-142 is a catalytic residue. The Proton donor role is filled by Ser-184. Glu-254 is an active-site residue.

It belongs to the MurB family. The cofactor is FAD.

Its subcellular location is the cytoplasm. It catalyses the reaction UDP-N-acetyl-alpha-D-muramate + NADP(+) = UDP-N-acetyl-3-O-(1-carboxyvinyl)-alpha-D-glucosamine + NADPH + H(+). Its pathway is cell wall biogenesis; peptidoglycan biosynthesis. Functionally, cell wall formation. The sequence is that of UDP-N-acetylenolpyruvoylglucosamine reductase from Campylobacter jejuni subsp. jejuni serotype O:2 (strain ATCC 700819 / NCTC 11168).